The sequence spans 492 residues: MYVLAIDQSTSGTKAIIFDEKGGIVHRVTVYHKQYYPKPGWVEHDPEEIFRNTLDACRKVIEESGIKPLEIEALAITNQRETTILWEKKSGKPVYNAVVWQCQRGASLCEEIKKRGLEGKIKEKTGLVVDPYFSASKIRWILDNVEGVKNKAKQGEIAFGTVDSWLIWKLTKGEVHATDFSNASRTLLLNIHELRWDEEVLEIFEIPPEILPELKSSDSVFGYTDLGFLPKKIPIVGVMGDSSAALFGQGGFYSGDIKVTYGTGSSTMLNIGEKPNVSDSPIVCSVGWVVKETSSYVLEGNIHSAGDTIVWLKEKLGIISDPSETEKIALSLENNGGVYLVPAFVGLGAPYWRSDVKAAILGLQRNHGKEHVVRAALESIAYQVRDIFEEMVRISSKEPTEVRADGGITRNRFLMQFQADILNIPVLVSNIEEVSARGVAFVALLHLGAFSDLEEIRQKITYREKYEPRMGDELREMYYEGWKTAIRKLLTE.

Threonine 10 serves as a coordination point for ADP. ATP-binding residues include threonine 10 and serine 11. Threonine 10 is a sn-glycerol 3-phosphate binding site. Lysine 14 lines the ADP pocket. Sn-glycerol 3-phosphate contacts are provided by arginine 80, glutamate 81, tyrosine 132, and aspartate 241. Glycerol is bound by residues arginine 80, glutamate 81, tyrosine 132, and aspartate 241. Positions 263, 306, 407, and 411 each coordinate ADP. The ATP site is built by threonine 263, glycine 306, and glycine 407.

This sequence belongs to the FGGY kinase family.

It carries out the reaction glycerol + ATP = sn-glycerol 3-phosphate + ADP + H(+). It participates in polyol metabolism; glycerol degradation via glycerol kinase pathway; sn-glycerol 3-phosphate from glycerol: step 1/1. Inhibited by fructose 1,6-bisphosphate (FBP). Its function is as follows. Key enzyme in the regulation of glycerol uptake and metabolism. Catalyzes the phosphorylation of glycerol to yield sn-glycerol 3-phosphate. In Thermotoga maritima (strain ATCC 43589 / DSM 3109 / JCM 10099 / NBRC 100826 / MSB8), this protein is Glycerol kinase 1.